Consider the following 2670-residue polypeptide: Inositol 1,4,5-trisphosphate-gated calcium channel ITPR3 (2670 aa).

At methionine 1–threonine 2201 the chain is on the cytoplasmic side. MIR domains are found at residues glycine 113–asparagine 173, glycine 174–phenylalanine 224, glutamate 232–valine 288, glycine 295–threonine 372, and aspartate 378–valine 434. Positions 266, 268, 269, and 270 each coordinate 1D-myo-inositol 1,4,5-trisphosphate. A disordered region spans residues proline 321–arginine 344. The 1D-myo-inositol 1,4,5-trisphosphate site is built by arginine 503, lysine 507, arginine 510, tyrosine 567, arginine 568, and lysine 569. Arginine 743 lines the Ca(2+) pocket. Phosphoserine is present on residues serine 916 and serine 934. Ca(2+) is bound by residues glutamate 1122 and glutamate 1125. The span at valine 1134–aspartate 1153 shows a compositional bias: basic and acidic residues. 2 disordered regions span residues valine 1134–lysine 1164 and asparagine 1807–arginine 1849. Phosphoserine occurs at positions 1813, 1832, and 1834. The segment covering serine 1831–serine 1842 has biased composition (low complexity). Residues glutamate 1881 and glutamate 1945 each coordinate Ca(2+). The ATP site is built by alanine 1995, glutamate 2148, and lysine 2151. The chain crosses the membrane as a helical span at residues leucine 2202–tyrosine 2222. At proline 2223–leucine 2233 the chain is on the extracellular side. Residues glycine 2234–phenylalanine 2254 traverse the membrane as a helical segment. The Cytoplasmic segment spans residues threonine 2255 to leucine 2263. A helical membrane pass occupies residues isoleucine 2264–leucine 2284. Residues glycine 2285 to glycine 2324 are Extracellular-facing. A helical membrane pass occupies residues tyrosine 2325–phenylalanine 2345. At aspartate 2346–serine 2367 the chain is on the cytoplasmic side. A helical membrane pass occupies residues isoleucine 2368–leucine 2388. Residues phenylalanine 2389–tyrosine 2495 are Extracellular-facing. Cysteines 2454 and 2460 form a disulfide. The chain crosses the membrane as a helical span at residues aspartate 2496–isoleucine 2516. Residues aspartate 2517–arginine 2670 lie on the Cytoplasmic side of the membrane. Cysteine 2537 and phenylalanine 2538 together coordinate ATP. Zn(2+) is bound at residue cysteine 2537. Zn(2+)-binding residues include cysteine 2540 and histidine 2557. Residues lysine 2559, histidine 2562, asparagine 2563, and methionine 2564 each contribute to the ATP site. Position 2562 (histidine 2562) interacts with Zn(2+). Threonine 2580 is a Ca(2+) binding site. 2 positions are modified to phosphoserine: serine 2608 and serine 2669.

It belongs to the InsP3 receptor family. In terms of assembly, homotetramer. Homodimer. Interacts with TRPC1 and TRPC3. Interacts with TRPC4. Interacts with TRPV4. Interacts with SIGMAR1. Interacts with AKT1 and PML. Interacts with IRAG2 (via coiled-coil domain). Interacts with CABP1. Interacts with TMBIM4/LFG4. Interacts with CEMIP. Interacts with TESPA1. Interacts with TMEM203. Interacts with BOK; regulates ITPR3 expression. Interacts with BCL2L10. Interacts with CHGA and CHGB. In terms of processing, phosphorylated by AKT1 on serine and/or threonine residues.

It is found in the endoplasmic reticulum membrane. The protein resides in the cytoplasmic vesicle. It localises to the secretory vesicle membrane. The enzyme catalyses Ca(2+)(in) = Ca(2+)(out). With respect to regulation, inositol 1,4,5-trisphosphate-gated calcium channel is regulated by cytosolic calcium in a biphasic manner. At low concentrations, cytosolic calcium binds at a high-affinity juxtamembrane domain (JD) calcium binding site, allowing ITPR3 to activate by escaping a low-energy resting state through an ensemble of preactivated states. At high cytosolic calcium concentrations, ITPR3 preferentially enters an inhibited state stabilized by calcium binding at a second, low-affinity cytoplasmic domain (CD) calcium binding site. Inositol 1,4,5-trisphosphate-gated calcium channel that, upon 1D-myo-inositol 1,4,5-trisphosphate binding, transports calcium from the endoplasmic reticulum lumen to cytoplasm, thus releasing the intracellular calcium and therefore participates in cellular calcium ion homeostasis. 11D-myo-inositol 1,4,5-trisphosphate binds to the ligand-free channel without altering its global conformation, yielding the low-energy resting state, then progresses through resting-to preactivated transitions to the higher energy preactivated state, which increases affinity for calcium, promoting binding of the low basal cytosolic calcium at the juxtamembrane domain (JD) site, favoring the transition through the ensemble of high-energy intermediate states along the trajectory to the fully-open activated state. Upon opening, releases calcium in the cytosol where it can bind to the low-affinity cytoplasmic domain (CD) site and stabilizes the inhibited state to terminate calcium release. The sequence is that of Inositol 1,4,5-trisphosphate-gated calcium channel ITPR3 from Rattus norvegicus (Rat).